A 435-amino-acid chain; its full sequence is Deoxybrevianamide E synthase (435 aa).

A disordered region spans residues 1-28 (MTAPELRAPAGHPQEPPARSSPAQALSS). Brevianamide F is bound at residue Glu-96. Arg-110, Lys-195, Tyr-197, Lys-265, Tyr-267, Tyr-354, Tyr-419, and Tyr-423 together coordinate dimethylallyl diphosphate.

The protein belongs to the tryptophan dimethylallyltransferase family. Monomer.

The enzyme catalyses brevianamide F + dimethylallyl diphosphate = deoxybrevianamide E + diphosphate. It participates in alkaloid biosynthesis. Deoxybrevianamide E synthase; part of the gene cluster that mediates the biosynthesis of notoamide, a fungal indole alkaloid that belongs to a family of natural products containing a characteristic bicyclo[2.2.2]diazaoctane core. The first step of notoamide biosynthesis involves coupling of L-proline and L-tryptophan by the bimodular NRPS notE', to produce cyclo-L-tryptophan-L-proline called brevianamide F. The reverse prenyltransferase notF' then acts as a deoxybrevianamide E synthase and converts brevianamide F to deoxybrevianamide E via reverse prenylation at C-2 of the indole ring leading to the bicyclo[2.2.2]diazaoctane core. Deoxybrevianamide E is further hydroxylated at C-6 of the indole ring, likely catalyzed by the cytochrome P450 monooxygenase notG', to yield 6-hydroxy-deoxybrevianamide E. 6-hydroxy-deoxybrevianamide E is a specific substrate of the prenyltransferase notC' for normal prenylation at C-7 to produce 6-hydroxy-7-prenyl-deoxybrevianamide, also called notoamide S. As the proposed pivotal branching point in notoamide biosynthesis, notoamide S can be diverted to notoamide E through an oxidative pyran ring closure putatively catalyzed by either notH' cytochrome P450 monooxygenase or the notD' FAD-linked oxidoreductase. This step would be followed by an indole 2,3-epoxidation-initiated pinacol-like rearrangement catalyzed by the notB' FAD-dependent monooxygenase leading to the formation of notoamide C and notoamide D. On the other hand notoamide S is converted to notoamide T by notH' (or notD'), a bifunctional oxidase that also functions as the intramolecular Diels-Alderase responsible for generation of (-)-notoamide T. To generate antipodal (+)-notoaminide T, notH (or notD) in Aspergillus strain MF297-2 is expected to catalyze a Diels-Alder reaction leading to the opposite stereochemistry. The remaining oxidoreductase notD' (or notH') likely catalyzes the oxidative pyran ring formation to yield (-)-stephacidin A. The FAD-dependent monooxygenase notI' is highly similar to notB' and is predicted to catalyze a similar conversion from (-)-stephacidin A to (+)-notoamide B via the 2,3-epoxidation of (-)-stephacidin A followed by a pinacol-type rearrangement. Finally, it remains unclear which enzyme could be responsible for the final hydroxylation steps leading to notoamide A and sclerotiamide. The chain is Deoxybrevianamide E synthase from Aspergillus versicolor.